The chain runs to 99 residues: Protein Tat (99 aa).

The interval 1-22 is disordered; the sequence is MDPVDPNLEPWNHPGSQPRTPC. Positions 1–24 are interaction with human CREBBP; it reads MDPVDPNLEPWNHPGSQPRTPCNK. The segment at 1–48 is transactivation; that stretch reads MDPVDPNLEPWNHPGSQPRTPCNKCHCKKCCYHCPVCFLNKGLGISYG. Zn(2+) contacts are provided by C22, C25, and C27. Positions 22–37 are cysteine-rich; that stretch reads CNKCHCKKCCYHCPVC. K28 carries the N6-acetyllysine; by host PCAF modification. Zn(2+) is bound by residues C30, H33, C34, and C37. A core region spans residues 38 to 48; the sequence is FLNKGLGISYG. Residues 48-99 are disordered; sequence GRKKRRQRRGPPQGGQAHQVPIPKQPSSQPRGDPTGPKEQKKKVESEAETDP. Residues 49-57 carry the Nuclear localization signal, RNA-binding (TAR), and protein transduction motif; that stretch reads RKKRRQRRG. The tract at residues 49–86 is interaction with the host capping enzyme RNGTT; the sequence is RKKRRQRRGPPQGGQAHQVPIPKQPSSQPRGDPTGPKE. An N6-acetyllysine; by host EP300 and GCN5L2 mark is found at K50 and K51. An asymmetric dimethylarginine; by host PRMT6 mark is found at R52 and R53. A Glycyl lysine isopeptide (Lys-Gly) (interchain with G-Cter in ubiquitin) cross-link involves residue K71. Positions 78 to 80 match the Cell attachment site motif; sequence RGD. Basic and acidic residues predominate over residues 83-93; the sequence is GPKEQKKKVES.

It belongs to the lentiviruses Tat family. Interacts with host CCNT1. Associates with the P-TEFb complex composed at least of Tat, P-TEFb (CDK9 and CCNT1), TAR RNA, RNA Pol II. Recruits the HATs CREBBP, TAF1/TFIID, EP300, PCAF and GCN5L2. Interacts with host KAT5/Tip60; this interaction targets the latter to degradation. Interacts with the host deacetylase SIRT1. Interacts with host capping enzyme RNGTT; this interaction stimulates RNGTT. Binds to host KDR, and to the host integrins ITGAV/ITGB3 and ITGA5/ITGB1. Interacts with host KPNB1/importin beta-1 without previous binding to KPNA1/importin alpha-1. Interacts with EIF2AK2. Interacts with host nucleosome assembly protein NAP1L1; this interaction may be required for the transport of Tat within the nucleus, since the two proteins interact at the nuclear rim. Interacts with host C1QBP/SF2P32; this interaction involves lysine-acetylated Tat. Interacts with the host chemokine receptors CCR2, CCR3 and CXCR4. Interacts with host DPP4/CD26; this interaction may trigger an anti-proliferative effect. Interacts with host LDLR. Interacts with the host extracellular matrix metalloproteinase MMP1. Interacts with host PRMT6; this interaction mediates Tat's methylation. Interacts with, and is ubiquitinated by MDM2/Hdm2. Interacts with host PSMC3 and HTATIP2. Interacts with STAB1; this interaction may overcome SATB1-mediated repression of IL2 and IL2RA (interleukin) in T cells by binding to the same domain than HDAC1. Interacts (when acetylated) with human CDK13, thereby increasing HIV-1 mRNA splicing and promoting the production of the doubly spliced HIV-1 protein Nef. Interacts with host TBP; this interaction modulates the activity of transcriptional pre-initiation complex. Interacts with host RELA. Interacts with host PLSCR1; this interaction negatively regulates Tat transactivation activity by altering its subcellular distribution. Asymmetrical arginine methylation by host PRMT6 seems to diminish the transactivation capacity of Tat and affects the interaction with host CCNT1. In terms of processing, acetylation by EP300, CREBBP, GCN5L2/GCN5 and PCAF regulates the transactivation activity of Tat. EP300-mediated acetylation of Lys-50 promotes dissociation of Tat from the TAR RNA through the competitive binding to PCAF's bromodomain. In addition, the non-acetylated Tat's N-terminus can also interact with PCAF. PCAF-mediated acetylation of Lys-28 enhances Tat's binding to CCNT1. Lys-50 is deacetylated by SIRT1. Post-translationally, polyubiquitination by host MDM2 does not target Tat to degradation, but activates its transactivation function and fosters interaction with CCNT1 and TAR RNA. Phosphorylated by EIF2AK2 on serine and threonine residues adjacent to the basic region important for TAR RNA binding and function. Phosphorylation of Tat by EIF2AK2 is dependent on the prior activation of EIF2AK2 by dsRNA.

The protein resides in the host nucleus. It is found in the host nucleolus. It localises to the host cytoplasm. Its subcellular location is the secreted. Transcriptional activator that increases RNA Pol II processivity, thereby increasing the level of full-length viral transcripts. Recognizes a hairpin structure at the 5'-LTR of the nascent viral mRNAs referred to as the transactivation responsive RNA element (TAR) and recruits the cyclin T1-CDK9 complex (P-TEFb complex) that will in turn hyperphosphorylate the RNA polymerase II to allow efficient elongation. The CDK9 component of P-TEFb and other Tat-activated kinases hyperphosphorylate the C-terminus of RNA Pol II that becomes stabilized and much more processive. Other factors such as HTATSF1/Tat-SF1, SUPT5H/SPT5, and HTATIP2 are also important for Tat's function. Besides its effect on RNA Pol II processivity, Tat induces chromatin remodeling of proviral genes by recruiting the histone acetyltransferases (HATs) CREBBP, EP300 and PCAF to the chromatin. This also contributes to the increase in proviral transcription rate, especially when the provirus integrates in transcriptionally silent region of the host genome. To ensure maximal activation of the LTR, Tat mediates nuclear translocation of NF-kappa-B by interacting with host RELA. Through its interaction with host TBP, Tat may also modulate transcription initiation. Tat can reactivate a latently infected cell by penetrating in it and transactivating its LTR promoter. In the cytoplasm, Tat is thought to act as a translational activator of HIV-1 mRNAs. Its function is as follows. Extracellular circulating Tat can be endocytosed by surrounding uninfected cells via the binding to several surface receptors such as CD26, CXCR4, heparan sulfate proteoglycans (HSPG) or LDLR. Neurons are rarely infected, but they internalize Tat via their LDLR. Through its interaction with nuclear HATs, Tat is potentially able to control the acetylation-dependent cellular gene expression. Modulates the expression of many cellular genes involved in cell survival, proliferation or in coding for cytokines or cytokine receptors. Tat plays a role in T-cell and neurons apoptosis. Tat induced neurotoxicity and apoptosis probably contribute to neuroAIDS. Circulating Tat also acts as a chemokine-like and/or growth factor-like molecule that binds to specific receptors on the surface of the cells, affecting many cellular pathways. In the vascular system, Tat binds to ITGAV/ITGB3 and ITGA5/ITGB1 integrins dimers at the surface of endothelial cells and competes with bFGF for heparin-binding sites, leading to an excess of soluble bFGF. This Homo sapiens (Human) protein is Protein Tat.